A 719-amino-acid polypeptide reads, in one-letter code: Putative alpha-1,3-mannosyltransferase MNT4 (719 aa).

The Cytoplasmic portion of the chain corresponds to 1 to 4 (MKFH). Residues 5–22 (LKRYVIVTSILLSFFLLF) traverse the membrane as a helical segment. The Lumenal portion of the chain corresponds to 23–719 (RRQFLPLTQR…KKLIEIWLQD (697 aa)). N-linked (GlcNAc...) asparagine glycans are attached at residues asparagine 148, asparagine 273, and asparagine 449.

The protein belongs to the MNN1/MNT family.

Its subcellular location is the golgi apparatus membrane. It functions in the pathway protein modification; protein glycosylation. Functionally, responsible for addition of the terminal mannose residues to the outer chain of core N-linked polysaccharides and to O-linked mannotriose. Implicated in late Golgi modifications. The protein is Putative alpha-1,3-mannosyltransferase MNT4 (MNT4) of Candida albicans (strain SC5314 / ATCC MYA-2876) (Yeast).